Here is a 119-residue protein sequence, read N- to C-terminus: Ribonuclease P protein component (119 aa).

Belongs to the RnpA family. Consists of a catalytic RNA component (M1 or rnpB) and a protein subunit.

The enzyme catalyses Endonucleolytic cleavage of RNA, removing 5'-extranucleotides from tRNA precursor.. Functionally, RNaseP catalyzes the removal of the 5'-leader sequence from pre-tRNA to produce the mature 5'-terminus. It can also cleave other RNA substrates such as 4.5S RNA. The protein component plays an auxiliary but essential role in vivo by binding to the 5'-leader sequence and broadening the substrate specificity of the ribozyme. This chain is Ribonuclease P protein component, found in Syntrophus aciditrophicus (strain SB).